A 435-amino-acid chain; its full sequence is S-locus-specific glycoprotein BS29-2 (435 aa).

A signal peptide spans Met-1–Ser-30. One can recognise a Bulb-type lectin domain in the interval Thr-33 to Trp-155. Residues Asn-113, Asn-120, Asn-244, Asn-260, and Asn-389 are each glycosylated (N-linked (GlcNAc...) asparagine). The PAN domain maps to Cys-350–Ala-430. Intrachain disulfides connect Cys-380–Cys-405 and Cys-388–Cys-390.

In terms of tissue distribution, stigma.

Functionally, involved in sporophytic self-incompatibility system (the inability of flowering plants to achieve self-fertilization). The polypeptide is S-locus-specific glycoprotein BS29-2 (SLSG) (Brassica oleracea var. alboglabra (Chinese kale)).